A 720-amino-acid polypeptide reads, in one-letter code: Engulfment and cell motility protein 3 (720 aa).

An ELMO domain is found at Glu307–Leu479. The PH domain maps to Arg542–Ser664. The short motif at Pro696–Pro706 is the SH3-binding element.

In terms of assembly, probably interacts directly with the SH3-domain of DOCK1 via its SH3-binding site. Part of a complex with DOCK1 and RAC1. Interacts with ADGRB3.

Its subcellular location is the cytoplasm. Involved in cytoskeletal rearrangements required for phagocytosis of apoptotic cells and cell motility. Acts in association with DOCK1 and CRK. Was initially proposed to be required in complex with DOCK1 to activate Rac Rho small GTPases. May enhance the guanine nucleotide exchange factor (GEF) activity of DOCK1. The polypeptide is Engulfment and cell motility protein 3 (Elmo3) (Mus musculus (Mouse)).